The chain runs to 173 residues: Small ribosomal subunit protein uS5 (173 aa).

The region spanning 17–80 (LREKMIAVNR…EEARRNMVKV (64 aa)) is the S5 DRBM domain.

It belongs to the universal ribosomal protein uS5 family. As to quaternary structure, part of the 30S ribosomal subunit. Contacts proteins S4 and S8.

In terms of biological role, with S4 and S12 plays an important role in translational accuracy. Functionally, located at the back of the 30S subunit body where it stabilizes the conformation of the head with respect to the body. The sequence is that of Small ribosomal subunit protein uS5 from Acidovorax sp. (strain JS42).